The primary structure comprises 179 residues: Large ribosomal subunit protein uL5 (179 aa).

It belongs to the universal ribosomal protein uL5 family. Part of the 50S ribosomal subunit; part of the 5S rRNA/L5/L18/L25 subcomplex. Contacts the 5S rRNA and the P site tRNA. Forms a bridge to the 30S subunit in the 70S ribosome.

Functionally, this is one of the proteins that bind and probably mediate the attachment of the 5S RNA into the large ribosomal subunit, where it forms part of the central protuberance. In the 70S ribosome it contacts protein S13 of the 30S subunit (bridge B1b), connecting the 2 subunits; this bridge is implicated in subunit movement. Contacts the P site tRNA; the 5S rRNA and some of its associated proteins might help stabilize positioning of ribosome-bound tRNAs. The sequence is that of Large ribosomal subunit protein uL5 from Solidesulfovibrio magneticus (strain ATCC 700980 / DSM 13731 / RS-1) (Desulfovibrio magneticus).